The primary structure comprises 103 residues: Small ribosomal subunit protein uS14c (103 aa).

The disordered stretch occupies residues 26-56; the sequence is SSKKKIRSKVSPLSLSEKTKMQEKLQSLPRN.

The protein belongs to the universal ribosomal protein uS14 family. As to quaternary structure, part of the 30S ribosomal subunit.

It localises to the plastid. It is found in the chloroplast. Functionally, binds 16S rRNA, required for the assembly of 30S particles. This Saccharum officinarum (Sugarcane) protein is Small ribosomal subunit protein uS14c.